The sequence spans 606 residues: Elongation factor 4 (606 aa).

A tr-type G domain is found at 11 to 193 (DKIRNFSIVA…AIVTRLPPPK (183 aa)). GTP is bound by residues 23 to 28 (DHGKST) and 140 to 143 (NKVD).

Belongs to the TRAFAC class translation factor GTPase superfamily. Classic translation factor GTPase family. LepA subfamily.

The protein resides in the cell inner membrane. The enzyme catalyses GTP + H2O = GDP + phosphate + H(+). Required for accurate and efficient protein synthesis under certain stress conditions. May act as a fidelity factor of the translation reaction, by catalyzing a one-codon backward translocation of tRNAs on improperly translocated ribosomes. Back-translocation proceeds from a post-translocation (POST) complex to a pre-translocation (PRE) complex, thus giving elongation factor G a second chance to translocate the tRNAs correctly. Binds to ribosomes in a GTP-dependent manner. This is Elongation factor 4 from Caulobacter vibrioides (strain ATCC 19089 / CIP 103742 / CB 15) (Caulobacter crescentus).